The sequence spans 146 residues: Hemoglobin subunit beta (146 aa).

The region spanning 2 to 146 (HWSAEEKQLI…VAHALARKYH (145 aa)) is the Globin domain. Residues His63 and His92 each coordinate heme b.

It belongs to the globin family. As to quaternary structure, heterotetramer of two alpha chains and two beta chains. Red blood cells.

Involved in oxygen transport from the lung to the various peripheral tissues. This chain is Hemoglobin subunit beta (HBB), found in Anser anser anser (Western greylag goose).